We begin with the raw amino-acid sequence, 541 residues long: 2-succinyl-5-enolpyruvyl-6-hydroxy-3-cyclohexene-1-carboxylate synthase (541 aa).

Belongs to the TPP enzyme family. MenD subfamily. In terms of assembly, homodimer. Mg(2+) is required as a cofactor. The cofactor is Mn(2+). Thiamine diphosphate serves as cofactor.

It carries out the reaction isochorismate + 2-oxoglutarate + H(+) = 5-enolpyruvoyl-6-hydroxy-2-succinyl-cyclohex-3-ene-1-carboxylate + CO2. It participates in quinol/quinone metabolism; 1,4-dihydroxy-2-naphthoate biosynthesis; 1,4-dihydroxy-2-naphthoate from chorismate: step 2/7. The protein operates within quinol/quinone metabolism; menaquinone biosynthesis. Its function is as follows. Catalyzes the thiamine diphosphate-dependent decarboxylation of 2-oxoglutarate and the subsequent addition of the resulting succinic semialdehyde-thiamine pyrophosphate anion to isochorismate to yield 2-succinyl-5-enolpyruvyl-6-hydroxy-3-cyclohexene-1-carboxylate (SEPHCHC). This is 2-succinyl-5-enolpyruvyl-6-hydroxy-3-cyclohexene-1-carboxylate synthase from Rhodococcus opacus (strain B4).